The following is a 31-amino-acid chain: Cytochrome b6-f complex subunit 6 (31 aa).

A helical membrane pass occupies residues 4-24 (ITSYFGFLLAALTITSALFIG).

This sequence belongs to the PetL family. As to quaternary structure, the 4 large subunits of the cytochrome b6-f complex are cytochrome b6, subunit IV (17 kDa polypeptide, PetD), cytochrome f and the Rieske protein, while the 4 small subunits are PetG, PetL, PetM and PetN. The complex functions as a dimer.

It localises to the plastid. The protein resides in the chloroplast thylakoid membrane. Its function is as follows. Component of the cytochrome b6-f complex, which mediates electron transfer between photosystem II (PSII) and photosystem I (PSI), cyclic electron flow around PSI, and state transitions. PetL is important for photoautotrophic growth as well as for electron transfer efficiency and stability of the cytochrome b6-f complex. In Coffea arabica (Arabian coffee), this protein is Cytochrome b6-f complex subunit 6.